Reading from the N-terminus, the 655-residue chain is p-hydroxybenzoic acid efflux pump subunit AaeB (655 aa).

Helical transmembrane passes span 13–33, 38–58, 69–89, 93–113, 121–141, 152–172, 370–390, 407–427, 431–451, 459–479, and 482–502; these read FAVK…HFQL, WAVL…GGEP, LRII…ISMI, LLMI…SSLV, WGLS…EPLL, EIVI…PRSI, LFWL…IAVV, FIYG…VIIP, QSML…GIEV, MGAL…TFHF, and FLDS…VILL.

It belongs to the aromatic acid exporter ArAE (TC 2.A.85) family.

It is found in the cell inner membrane. Functionally, forms an efflux pump with AaeA. Could function as a metabolic relief valve, allowing to eliminate certain compounds when they accumulate to high levels in the cell. The protein is p-hydroxybenzoic acid efflux pump subunit AaeB of Salmonella enteritidis PT4 (strain P125109).